The primary structure comprises 831 residues: AdoMet-dependent rRNA methyltransferase SPB1 (831 aa).

Residues Gly58, Trp60, Asp78, Asp94, and Asp119 each contribute to the S-adenosyl-L-methionine site. Lys159 functions as the Proton acceptor in the catalytic mechanism. Coiled-coil stretches lie at residues Leu346–Met389 and Asn440–Ala479. Disordered stretches follow at residues Asp492–Arg535 and Met565–Ser645. Residues Glu499–Glu510 are compositionally biased toward basic and acidic residues. 3 stretches are compositionally biased toward acidic residues: residues Ala511–Glu526, Met594–Phe611, and Pro618–Asn631. The segment covering Asp632 to Ser645 has biased composition (basic and acidic residues). A coiled-coil region spans residues Leu729–Lys782.

Belongs to the class I-like SAM-binding methyltransferase superfamily. RNA methyltransferase RlmE family. SPB1 subfamily. As to quaternary structure, component of the nucleolar and nucleoplasmic pre-60S ribosomal particle.

It is found in the nucleus. It localises to the nucleolus. The catalysed reaction is a ribonucleotide in rRNA + S-adenosyl-L-methionine = a 2'-O-methylribonucleotide in rRNA + S-adenosyl-L-homocysteine + H(+). Functionally, required for proper assembly of pre-ribosomal particles during the biogenesis of the 60S ribosomal subunit. The protein is AdoMet-dependent rRNA methyltransferase SPB1 of Debaryomyces hansenii (strain ATCC 36239 / CBS 767 / BCRC 21394 / JCM 1990 / NBRC 0083 / IGC 2968) (Yeast).